Consider the following 98-residue polypeptide: Citrate lyase acyl carrier protein (98 aa).

O-(phosphoribosyl dephospho-coenzyme A)serine is present on Ser-14.

This sequence belongs to the CitD family. In terms of assembly, oligomer with a subunit composition of (alpha,beta,gamma)6.

The protein localises to the cytoplasm. Covalent carrier of the coenzyme of citrate lyase. The sequence is that of Citrate lyase acyl carrier protein from Albidiferax ferrireducens (strain ATCC BAA-621 / DSM 15236 / T118) (Rhodoferax ferrireducens).